A 361-amino-acid chain; its full sequence is Deoxyribonuclease-2-beta (361 aa).

Residues 1–27 form the signal peptide; it reads MKQKMMARLLRTSFALLFLGLFGVLGA. Asparagine 81, asparagine 103, asparagine 119, and asparagine 278 each carry an N-linked (GlcNAc...) asparagine glycan.

The protein belongs to the DNase II family. In terms of tissue distribution, highly expressed in the eye lens and in salivary gland. Detected at lower levels in lung, prostate and lymph node. Isoform 2 is lung specific.

Its subcellular location is the lysosome. The enzyme catalyses Endonucleolytic cleavage to nucleoside 3'-phosphates and 3'-phosphooligonucleotide end-products.. In terms of biological role, hydrolyzes DNA under acidic conditions. Does not require divalent cations for activity. Participates in the degradation of nuclear DNA during lens cell differentiation. The protein is Deoxyribonuclease-2-beta (DNASE2B) of Homo sapiens (Human).